The chain runs to 842 residues: Valine--tRNA ligase (842 aa).

Positions 86 to 96 (PFTSGELHMGH) match the 'HIGH' region motif. The short motif at 572-576 (RMSKS) is the 'KMSKS' region element. Residue Lys-575 participates in ATP binding.

It belongs to the class-I aminoacyl-tRNA synthetase family. ValS type 2 subfamily.

Its subcellular location is the cytoplasm. It catalyses the reaction tRNA(Val) + L-valine + ATP = L-valyl-tRNA(Val) + AMP + diphosphate. Functionally, catalyzes the attachment of valine to tRNA(Val). As ValRS can inadvertently accommodate and process structurally similar amino acids such as threonine, to avoid such errors, it has a 'posttransfer' editing activity that hydrolyzes mischarged Thr-tRNA(Val) in a tRNA-dependent manner. The protein is Valine--tRNA ligase of Saccharolobus solfataricus (strain ATCC 35092 / DSM 1617 / JCM 11322 / P2) (Sulfolobus solfataricus).